The chain runs to 571 residues: Proline--tRNA ligase (571 aa).

The protein belongs to the class-II aminoacyl-tRNA synthetase family. ProS type 1 subfamily. As to quaternary structure, homodimer.

The protein resides in the cytoplasm. The enzyme catalyses tRNA(Pro) + L-proline + ATP = L-prolyl-tRNA(Pro) + AMP + diphosphate. Functionally, catalyzes the attachment of proline to tRNA(Pro) in a two-step reaction: proline is first activated by ATP to form Pro-AMP and then transferred to the acceptor end of tRNA(Pro). As ProRS can inadvertently accommodate and process non-cognate amino acids such as alanine and cysteine, to avoid such errors it has two additional distinct editing activities against alanine. One activity is designated as 'pretransfer' editing and involves the tRNA(Pro)-independent hydrolysis of activated Ala-AMP. The other activity is designated 'posttransfer' editing and involves deacylation of mischarged Ala-tRNA(Pro). The misacylated Cys-tRNA(Pro) is not edited by ProRS. The polypeptide is Proline--tRNA ligase (Acinetobacter baumannii (strain AB307-0294)).